Reading from the N-terminus, the 192-residue chain is Probable nicotinate-nucleotide adenylyltransferase (192 aa).

Belongs to the NadD family.

The enzyme catalyses nicotinate beta-D-ribonucleotide + ATP + H(+) = deamido-NAD(+) + diphosphate. It participates in cofactor biosynthesis; NAD(+) biosynthesis; deamido-NAD(+) from nicotinate D-ribonucleotide: step 1/1. Its function is as follows. Catalyzes the reversible adenylation of nicotinate mononucleotide (NaMN) to nicotinic acid adenine dinucleotide (NaAD). The sequence is that of Probable nicotinate-nucleotide adenylyltransferase from Rhizobium etli (strain ATCC 51251 / DSM 11541 / JCM 21823 / NBRC 15573 / CFN 42).